The primary structure comprises 114 residues: MAVGHYDLKRTKNKQYYFNLKASNGEVILTSEMYTTKAAANKGIRSVQANSPAEKNFEIRENKSGKSYFVLKARNYQVIGISESYDNEVAVKKGIQSAIKHGSSVNVRDLTKSE.

2 consecutive repeat copies span residues 11 to 59 (TKNK…NFEI) and 62 to 110 (NKSG…VRDL).

It belongs to the UPF0339 family. Duplicated subfamily.

In Photorhabdus laumondii subsp. laumondii (strain DSM 15139 / CIP 105565 / TT01) (Photorhabdus luminescens subsp. laumondii), this protein is UPF0339 protein plu2779.